A 121-amino-acid chain; its full sequence is Large ribosomal subunit protein uL14 (121 aa).

It belongs to the universal ribosomal protein uL14 family. In terms of assembly, part of the 50S ribosomal subunit. Forms a cluster with proteins L3 and L19. In the 70S ribosome, L14 and L19 interact and together make contacts with the 16S rRNA in bridges B5 and B8.

Its function is as follows. Binds to 23S rRNA. Forms part of two intersubunit bridges in the 70S ribosome. In Parabacteroides distasonis (strain ATCC 8503 / DSM 20701 / CIP 104284 / JCM 5825 / NCTC 11152), this protein is Large ribosomal subunit protein uL14.